Here is a 528-residue protein sequence, read N- to C-terminus: Probable cyclic di-GMP phosphodiesterase PdeC (528 aa).

Transmembrane regions (helical) follow at residues 14–34 (GIIFLVLFPIILSLWIAFLWA) and 242–262 (HLIFALPAGILGSLVLLLLWL). The EAL domain occupies 268–520 (YLSPKRKLQR…VFMQWMEQLP (253 aa)).

It is found in the cell inner membrane. It carries out the reaction 3',3'-c-di-GMP + H2O = 5'-phosphoguanylyl(3'-&gt;5')guanosine + H(+). In terms of biological role, phosphodiesterase (PDE) that catalyzes the hydrolysis of cyclic-di-GMP (c-di-GMP) to 5'-pGpG. Cyclic-di-GMP is a second messenger which controls cell surface-associated traits in bacteria. Overexpression reduces biofilm formation. This is Probable cyclic di-GMP phosphodiesterase PdeC from Escherichia coli (strain K12).